The following is a 565-amino-acid chain: Urocanate hydratase (565 aa).

NAD(+)-binding positions include 61–62 (GG), Gln-139, 185–187 (GMG), Glu-205, Arg-210, 251–252 (NA), 272–276 (QTSAH), 282–283 (YL), and Tyr-331. Residue Cys-419 is part of the active site. The tract at residues 453–472 (LDSGSVSSPNRETESMKDGS) is disordered. A compositionally biased stretch (basic and acidic residues) spans 463 to 472 (RETESMKDGS). Gly-501 lines the NAD(+) pocket.

The protein belongs to the urocanase family. NAD(+) serves as cofactor.

It localises to the cytoplasm. It catalyses the reaction 4-imidazolone-5-propanoate = trans-urocanate + H2O. It functions in the pathway amino-acid degradation; L-histidine degradation into L-glutamate; N-formimidoyl-L-glutamate from L-histidine: step 2/3. Functionally, catalyzes the conversion of urocanate to 4-imidazolone-5-propionate. The protein is Urocanate hydratase of Pseudomonas syringae.